The primary structure comprises 485 residues: Glutamyl-tRNA(Gln) amidotransferase subunit A (485 aa).

Active-site charge relay system residues include Lys79 and Ser154. The active-site Acyl-ester intermediate is the Ser178.

The protein belongs to the amidase family. GatA subfamily. In terms of assembly, heterotrimer of A, B and C subunits.

It carries out the reaction L-glutamyl-tRNA(Gln) + L-glutamine + ATP + H2O = L-glutaminyl-tRNA(Gln) + L-glutamate + ADP + phosphate + H(+). In terms of biological role, allows the formation of correctly charged Gln-tRNA(Gln) through the transamidation of misacylated Glu-tRNA(Gln) in organisms which lack glutaminyl-tRNA synthetase. The reaction takes place in the presence of glutamine and ATP through an activated gamma-phospho-Glu-tRNA(Gln). This chain is Glutamyl-tRNA(Gln) amidotransferase subunit A, found in Carboxydothermus hydrogenoformans (strain ATCC BAA-161 / DSM 6008 / Z-2901).